Consider the following 264-residue polypeptide: uncharacterized protein (264 aa).

A disordered region spans residues 57–264 (RPPASPCPPR…VYPHPHLTAT (208 aa)). The segment covering 140–153 (GKARRSPGRRRHPH) has biased composition (basic residues). Residues 154-165 (SSFPQASSPSSP) are compositionally biased toward low complexity.

This is an uncharacterized protein from Homo sapiens (Human).